Here is a 372-residue protein sequence, read N- to C-terminus: Cytochrome b (372 aa).

Helical transmembrane passes span 25 to 45, 69 to 90, 105 to 125, and 170 to 190; these read FGSM…FLAI, WIIQ…YTHI, WLSG…GYVL, and FFAL…IHII. The heme b site is built by histidine 75 and histidine 89. Heme b-binding residues include histidine 174 and histidine 188. Histidine 193 provides a ligand contact to a ubiquinone. A run of 4 helical transmembrane segments spans residues 218-238, 280-300, 312-332, and 339-358; these read YKDT…MSFM, LGGT…PFTH, LTQI…WSAT, and FIFI…IINP.

This sequence belongs to the cytochrome b family. In terms of assembly, the cytochrome bc1 complex contains 3 respiratory subunits (MT-CYB, CYC1 and UQCRFS1), 2 core proteins (UQCRC1 and UQCRC2) and probably 6 low-molecular weight proteins. Heme b is required as a cofactor.

Its subcellular location is the mitochondrion inner membrane. In terms of biological role, component of the ubiquinol-cytochrome c reductase complex (complex III or cytochrome b-c1 complex) that is part of the mitochondrial respiratory chain. The b-c1 complex mediates electron transfer from ubiquinol to cytochrome c. Contributes to the generation of a proton gradient across the mitochondrial membrane that is then used for ATP synthesis. The sequence is that of Cytochrome b (MT-CYB) from Hydrophis semperi (Lake Taal snake).